The chain runs to 85 residues: UPF0181 protein YPTS_1774 (85 aa).

Positions Asp-57–Asp-72 are enriched in basic and acidic residues. Residues Asp-57–Gly-85 are disordered. Residues Glu-73–Gly-85 show a composition bias toward acidic residues.

This sequence belongs to the UPF0181 family.

This Yersinia pseudotuberculosis serotype IB (strain PB1/+) protein is UPF0181 protein YPTS_1774.